Here is a 364-residue protein sequence, read N- to C-terminus: Chaperone protein DnaJ (364 aa).

The region spanning 4-69 is the J domain; that stretch reads DYYEILGLSK…NKKAKYDRFG (66 aa). The CR-type zinc-finger motif lies at 135–213; it reads GYKNNINITR…CKGKGRITNQ (79 aa). Zn(2+) contacts are provided by cysteine 148, cysteine 151, cysteine 165, cysteine 168, cysteine 187, cysteine 190, cysteine 201, and cysteine 204. CXXCXGXG motif repeat units lie at residues 148–155, 165–172, 187–194, and 201–208; these read CHSCLGKK, CNMCNGSG, CSKCYGEG, and CKSCKGKG.

It belongs to the DnaJ family. In terms of assembly, homodimer. It depends on Zn(2+) as a cofactor.

It is found in the cytoplasm. Participates actively in the response to hyperosmotic and heat shock by preventing the aggregation of stress-denatured proteins and by disaggregating proteins, also in an autonomous, DnaK-independent fashion. Unfolded proteins bind initially to DnaJ; upon interaction with the DnaJ-bound protein, DnaK hydrolyzes its bound ATP, resulting in the formation of a stable complex. GrpE releases ADP from DnaK; ATP binding to DnaK triggers the release of the substrate protein, thus completing the reaction cycle. Several rounds of ATP-dependent interactions between DnaJ, DnaK and GrpE are required for fully efficient folding. Also involved, together with DnaK and GrpE, in the DNA replication of plasmids through activation of initiation proteins. This chain is Chaperone protein DnaJ, found in Borrelia garinii subsp. bavariensis (strain ATCC BAA-2496 / DSM 23469 / PBi) (Borreliella bavariensis).